The primary structure comprises 410 residues: Translation initiation factor 2 subunit gamma (410 aa).

In terms of domain architecture, tr-type G spans 6–203; that stretch reads QSEVNIGMVG…AIQEFIPTPK (198 aa). The tract at residues 15–22 is G1; that stretch reads GHVDHGKT. Residues Asp18, Thr22, Gly43, and Ser45 each coordinate Mg(2+). 18–23 contacts GTP; that stretch reads DHGKTS. The segment at 43-47 is G2; that stretch reads GISIR. Zn(2+) is bound by residues Cys58, Cys61, Cys73, and Cys76. Positions 90 to 93 are G3; it reads DAPG. GTP-binding positions include 146–149 and 181–183; these read NKID and SAH. The interval 146-149 is G4; that stretch reads NKID. A G5 region spans residues 181 to 183; it reads SAH.

The protein belongs to the TRAFAC class translation factor GTPase superfamily. Classic translation factor GTPase family. EIF2G subfamily. As to quaternary structure, heterotrimer composed of an alpha, a beta and a gamma chain. It depends on Mg(2+) as a cofactor.

The catalysed reaction is GTP + H2O = GDP + phosphate + H(+). EIF-2 functions in the early steps of protein synthesis by forming a ternary complex with GTP and initiator tRNA. The polypeptide is Translation initiation factor 2 subunit gamma (Methanococcus maripaludis (strain C6 / ATCC BAA-1332)).